We begin with the raw amino-acid sequence, 255 residues long: Methanethiol S-methyltransferase (255 aa).

A run of 5 helical transmembrane segments spans residues Phe-16–Val-36, Leu-56–Val-76, Tyr-99–Ile-119, Ile-131–Ile-151, and Val-191–Ala-211.

It belongs to the nurim family.

It is found in the membrane. It carries out the reaction methanethiol + S-adenosyl-L-methionine = dimethyl sulfide + S-adenosyl-L-homocysteine + H(+). Catalyzes the methylation of methanethiol (MeSH) to yield dimethylsulphide (DMS). The sequence is that of Methanethiol S-methyltransferase from Crocosphaera subtropica (strain ATCC 51142 / BH68) (Cyanothece sp. (strain ATCC 51142)).